Reading from the N-terminus, the 356-residue chain is tRNA (guanine(26)-N(2))-dimethyltransferase (356 aa).

Positions 5 to 352 (VLRREGTVEF…VSAGEVERVL (348 aa)) constitute a Trm1 methyltransferase domain. The S-adenosyl-L-methionine site is built by arginine 40, arginine 67, aspartate 85, aspartate 111, and alanine 112.

It belongs to the class I-like SAM-binding methyltransferase superfamily. Trm1 family.

The catalysed reaction is guanosine(26) in tRNA + 2 S-adenosyl-L-methionine = N(2)-dimethylguanosine(26) in tRNA + 2 S-adenosyl-L-homocysteine + 2 H(+). Its function is as follows. Dimethylates a single guanine residue at position 26 of a number of tRNAs using S-adenosyl-L-methionine as donor of the methyl groups. This chain is tRNA (guanine(26)-N(2))-dimethyltransferase, found in Pyrobaculum arsenaticum (strain DSM 13514 / JCM 11321 / PZ6).